The sequence spans 798 residues: Integrin beta-1-B (798 aa).

The signal sequence occupies residues 1-21 (MARYPVFTFVFLICLVLCTNA). At 22–727 (QQGGTECLKA…VKEPECPSGP (706 aa)) the chain is on the extracellular side. Residues 27–77 (ECLKANAKSCGECIQAGPNCGWCTKVDFLQEGEPTSARCDDLAALKTKGCP) enclose the PSI domain. 28 disulfide bridges follow: Cys28/Cys46, Cys36/Cys464, Cys39/Cys65, Cys49/Cys76, Cys206/Cys212, Cys260/Cys300, Cys400/Cys414, Cys434/Cys462, Cys466/Cys486, Cys477/Cys489, Cys491/Cys500, Cys502/Cys533, Cys516/Cys531, Cys525/Cys536, Cys538/Cys553, Cys555/Cys576, Cys560/Cys574, Cys568/Cys579, Cys581/Cys590, Cys592/Cys615, Cys599/Cys613, Cys607/Cys618, Cys620/Cys630, Cys633/Cys636, Cys640/Cys691, Cys646/Cys665, Cys649/Cys661, and Cys699/Cys723. Positions 77-106 (PEDDIQNPRGRKQKLKDIPITSKGKGERMD) are disordered. 2 N-linked (GlcNAc...) asparagine glycosylation sites follow: Asn109 and Asn131. Positions 139 to 377 (DYPIDLYYLM…QLIIDSYNSL (239 aa)) constitute a VWFA domain. Residues Ser151 and Ser153 each coordinate Mg(2+). Residues Ser153, Asp156, Asp157, and Glu188 each contribute to the Ca(2+) site. Asn211 and Asn223 each carry an N-linked (GlcNAc...) asparagine glycan. Ca(2+) is bound by residues Asn243, Asp245, Pro247, and Glu248. Mg(2+) is bound at residue Glu248. Asn268 and Asn362 each carry an N-linked (GlcNAc...) asparagine glycan. Asn416 carries an N-linked (GlcNAc...) asparagine glycan. I-EGF domains are found at residues 466–501 (CQDKGTPNSPECHFGNGTFECGACRCNEGRIGKECE), 502–554 (CSTD…KYCE), 555–591 (CDNFNCDRSNGLICGGKGVCKCRVCECFPNYSGSACD), and 592–631 (CSEDTSTCMAKNGQICNGRGICDCGRCKCTDPKFQGPTCE). N-linked (GlcNAc...) asparagine glycosylation occurs at Asn481. Residue Asn520 is glycosylated (N-linked (GlcNAc...) asparagine). Asn584 is a glycosylation site (N-linked (GlcNAc...) asparagine). N-linked (GlcNAc...) asparagine glycosylation is present at Asn669. A helical transmembrane segment spans residues 728 to 751 (DIIPIVAGVVAGIVLIGLALLLIW). The Cytoplasmic segment spans residues 752–798 (KLLMIIHDRREFAKFEKEKMNAKWDTGENPIYKSAVATVVNPKYEGK). Tyr783 carries the phosphotyrosine modification.

This sequence belongs to the integrin beta chain family. In terms of assembly, heterodimer of an alpha and a beta subunit.

The protein resides in the cell membrane. It localises to the cell projection. The protein localises to the invadopodium membrane. Its subcellular location is the ruffle membrane. It is found in the melanosome. The protein resides in the cleavage furrow. It localises to the lamellipodium. The protein localises to the ruffle. Functionally, beta integrins associate with alpha subunits to form receptor complexes that recognize the sequence R-G-D in a wide array of ligands. May be involved in osteoblast compaction. May play role in myoblast differentiation and fusion during skeletal myogenesis. This chain is Integrin beta-1-B (itgb1-b), found in Xenopus laevis (African clawed frog).